The following is a 240-amino-acid chain: MEDLLNNAKQHLCMRNPKLIRIGLRQVESIVYHVAKPSHDDKIPREIFLKLQDSPLYNSTTPCIYALDSLLEYQQNEEAYEKNFQFIQKLIDDLLHVIEGLVLIHPKSQTLFEDKATLRLFIHLLQPSQPSMLQVAAMKTLVCIMADRPLAIRLFEQINGLQQICVVFKHKQTSQDTRFQILEFFYFYLSPEPYSIDVIAYRKTRTEKQAYLSKYLSNVQGLRDDLDKFQPFGKLDETFD.

Interacts with sid1.

The protein localises to the cytoplasm. The protein resides in the cytoskeleton. It localises to the microtubule organizing center. Its subcellular location is the spindle pole body. Has a role in the septation initiation network (SIN) required for cytokinesis. This is Cell division control protein 14 (cdc14) from Schizosaccharomyces pombe (strain 972 / ATCC 24843) (Fission yeast).